Reading from the N-terminus, the 511-residue chain is Apolipoprotein N-acyltransferase (511 aa).

Helical transmembrane passes span 7–29, 58–78, 90–110, 125–145, 163–183, and 192–212; these read PGWPGHLLALAAGALTPLALAPF, GWWYGFGAFGAGTSWIYVSIH, LLMLGFTAGVAFFFALPAWLW, LAFAALWLALELFRSWFLTGF, VPVGGVWLSSFVIALSAALLV, and GASLLLGLVLLLGPWAAGLYL. The CN hydrolase domain maps to 230–470; it reads IQGNIAQELK…QGILRGEVIP (241 aa). Catalysis depends on E269, which acts as the Proton acceptor. The active site involves K330. C382 (nucleophile) is an active-site residue. Residues 482–502 form a helical membrane-spanning segment; it reads VWPLAGLAGVLLLWALLGRQL.

Belongs to the CN hydrolase family. Apolipoprotein N-acyltransferase subfamily.

Its subcellular location is the cell inner membrane. It catalyses the reaction N-terminal S-1,2-diacyl-sn-glyceryl-L-cysteinyl-[lipoprotein] + a glycerophospholipid = N-acyl-S-1,2-diacyl-sn-glyceryl-L-cysteinyl-[lipoprotein] + a 2-acyl-sn-glycero-3-phospholipid + H(+). It participates in protein modification; lipoprotein biosynthesis (N-acyl transfer). In terms of biological role, catalyzes the phospholipid dependent N-acylation of the N-terminal cysteine of apolipoprotein, the last step in lipoprotein maturation. The protein is Apolipoprotein N-acyltransferase of Pseudomonas aeruginosa (strain ATCC 15692 / DSM 22644 / CIP 104116 / JCM 14847 / LMG 12228 / 1C / PRS 101 / PAO1).